Here is a 525-residue protein sequence, read N- to C-terminus: ALBINO3-like protein 2, chloroplastic (525 aa).

The next 4 membrane-spanning stretches (helical) occupy residues 99-119 (WMII…LLIL), 167-187 (LWFF…MASI), 217-237 (FGPV…QISF), and 262-282 (ILSV…LVYW). TPR repeat units follow at residues 346–379 (PEEL…DPGY), 380–413 (VRGL…LLDE), 425–458 (MLAS…REPG), and 467–500 (FEAL…NPAY).

Belongs to the OXA1/ALB3/YidC (TC 2.A.9.2) family.

Its subcellular location is the plastid. It is found in the chloroplast thylakoid membrane. Functionally, probably required for the insertion of integral membrane proteins into the chloroplast thylakoid membranes. This is ALBINO3-like protein 2, chloroplastic (ALB3L2) from Arabidopsis thaliana (Mouse-ear cress).